An 802-amino-acid chain; its full sequence is Phenylalanine--tRNA ligase beta subunit (802 aa).

The region spanning 40–149 is the tRNA-binding domain; the sequence is RPELDFVKIV…EGAEIGKTIR (110 aa). The B5 domain maps to 407 to 484; sequence HKEVRIHTDI…RTRGYDTIQV (78 aa). Residues aspartate 462, aspartate 468, glutamate 471, and glutamate 472 each coordinate Mg(2+). One can recognise an FDX-ACB domain in the interval 710 to 802; it reads SQFPEAEIDI…LAGKNGFVLR (93 aa).

Belongs to the phenylalanyl-tRNA synthetase beta subunit family. Type 1 subfamily. As to quaternary structure, tetramer of two alpha and two beta subunits. It depends on Mg(2+) as a cofactor.

The protein localises to the cytoplasm. The enzyme catalyses tRNA(Phe) + L-phenylalanine + ATP = L-phenylalanyl-tRNA(Phe) + AMP + diphosphate + H(+). This Leptospira borgpetersenii serovar Hardjo-bovis (strain L550) protein is Phenylalanine--tRNA ligase beta subunit.